A 206-amino-acid chain; its full sequence is U-scoloptoxin(08)-Cw1a (206 aa).

A signal peptide spans 1 to 24 (MIFRVNLLFSCFCFVLFVFDFSNA). Positions 25-164 (SKYDQGSLNI…DLPELKRRKR (140 aa)) are excised as a propeptide. One copy of the RLWRNWE 1; approximate repeat lies at 37–43 (RLWRDWE). The RLWRNWE 2; approximate repeat unit spans residues 71–77 (RLWRDWE). An RLWRNWE 3; approximate repeat occupies 104 to 110 (RLWRDWE). The stretch at 137-143 (RLWRNWE) is one RLWRNWE 4 repeat. Residues 164–170 (RLWRNED) form an RLWRNWE 5; approximate repeat.

It belongs to the scoloptoxin-08 family. In terms of processing, contains 3 disulfide bonds. In terms of tissue distribution, expressed by the venom gland.

It is found in the secreted. The polypeptide is U-scoloptoxin(08)-Cw1a (Cormocephalus westwoodi (Westwood's green centipede)).